A 438-amino-acid chain; its full sequence is Chromosomal replication initiator protein DnaA (438 aa).

Residues 1–74 (MNEINKIWQK…SFYQITGSQV (74 aa)) are domain I, interacts with DnaA modulators. The segment at 74–100 (VEVKYIITGKEHETGLIEEKKQVIKKG) is domain II. The tract at residues 101–317 (NLNPKYTFDT…GSLIKLCAYT (217 aa)) is domain III, AAA+ region. Residues G145, G147, K148, and T149 each contribute to the ATP site. Residues 318–438 (SLTKVPISMD…DSIIKKVTGQ (121 aa)) form a domain IV, binds dsDNA region.

Belongs to the DnaA family. As to quaternary structure, oligomerizes as a right-handed, spiral filament on DNA at oriC.

The protein localises to the cytoplasm. Functionally, plays an essential role in the initiation and regulation of chromosomal replication. ATP-DnaA binds to the origin of replication (oriC) to initiate formation of the DNA replication initiation complex once per cell cycle. Binds the DnaA box (a 9 base pair repeat at the origin) and separates the double-stranded (ds)DNA. Forms a right-handed helical filament on oriC DNA; dsDNA binds to the exterior of the filament while single-stranded (ss)DNA is stabiized in the filament's interior. The ATP-DnaA-oriC complex binds and stabilizes one strand of the AT-rich DNA unwinding element (DUE), permitting loading of DNA polymerase. After initiation quickly degrades to an ADP-DnaA complex that is not apt for DNA replication. Binds acidic phospholipids. This Thermodesulfovibrio yellowstonii (strain ATCC 51303 / DSM 11347 / YP87) protein is Chromosomal replication initiator protein DnaA.